The sequence spans 86 residues: Translation initiation factor IF-1 3 (86 aa).

The S1-like domain occupies 1–72 (MAKEELIEMQ…NKGRVTFRHI (72 aa)).

It belongs to the IF-1 family. Component of the 30S ribosomal translation pre-initiation complex which assembles on the 30S ribosome in the order IF-2 and IF-3, IF-1 and N-formylmethionyl-tRNA(fMet); mRNA recruitment can occur at any time during PIC assembly.

It localises to the cytoplasm. One of the essential components for the initiation of protein synthesis. Stabilizes the binding of IF-2 and IF-3 on the 30S subunit to which N-formylmethionyl-tRNA(fMet) subsequently binds. Helps modulate mRNA selection, yielding the 30S pre-initiation complex (PIC). Upon addition of the 50S ribosomal subunit IF-1, IF-2 and IF-3 are released leaving the mature 70S translation initiation complex. In Acidovorax sp. (strain JS42), this protein is Translation initiation factor IF-1 3.